A 793-amino-acid polypeptide reads, in one-letter code: PC3-like endoprotease variant A (793 aa).

The N-terminal stretch at 1 to 29 (MNYRGIYRRRYVFVLLLLVAVVNISYGWT) is a signal peptide. The propeptide occupies 30 to 152 (VLKNKDYKRR…QQKILERVKR (123 aa)). 2 N-linked (GlcNAc...) asparagine glycosylation sites follow: asparagine 62 and asparagine 190. The Peptidase S8 domain occupies 164 to 486 (MWYLLNTGQA…FGRLDANAMV (323 aa)). Catalysis depends on charge relay system residues aspartate 202 and histidine 242. 2 disulfide bridges follow: cysteine 259–cysteine 411 and cysteine 351–cysteine 381. The active-site Charge relay system is serine 419. Positions 495–638 (LPAQRKCTAA…EERVIDTQTK (144 aa)) constitute a P/Homo B domain. A disulfide bond links cysteine 501 and cysteine 527.

This sequence belongs to the peptidase S8 family. Furin subfamily. As to expression, predominantly in the body column.

Probably involved in the processing of hormone and other protein precursors at sites comprised of pairs of basic amino acid residues. The protein is PC3-like endoprotease variant A of Hydra vulgaris (Hydra).